Reading from the N-terminus, the 377-residue chain is Beta sliding clamp (377 aa).

Belongs to the beta sliding clamp family. As to quaternary structure, forms a ring-shaped head-to-tail homodimer around DNA which binds and tethers DNA polymerases and other proteins to the DNA. The DNA replisome complex has a single clamp-loading complex (3 tau and 1 each of delta, delta', psi and chi subunits) which binds 3 Pol III cores (1 core on the leading strand and 2 on the lagging strand) each with a beta sliding clamp dimer. Additional proteins in the replisome are other copies of gamma, psi and chi, Ssb, DNA helicase and RNA primase.

It is found in the cytoplasm. Confers DNA tethering and processivity to DNA polymerases and other proteins. Acts as a clamp, forming a ring around DNA (a reaction catalyzed by the clamp-loading complex) which diffuses in an ATP-independent manner freely and bidirectionally along dsDNA. Initially characterized for its ability to contact the catalytic subunit of DNA polymerase III (Pol III), a complex, multichain enzyme responsible for most of the replicative synthesis in bacteria; Pol III exhibits 3'-5' exonuclease proofreading activity. The beta chain is required for initiation of replication as well as for processivity of DNA replication. The chain is Beta sliding clamp (dnaN) from Staphylococcus epidermidis (strain ATCC 35984 / DSM 28319 / BCRC 17069 / CCUG 31568 / BM 3577 / RP62A).